The sequence spans 154 residues: N-acetylneuraminate anomerase NanQ (154 aa).

Belongs to the NanQ anomerase family. Zn(2+) is required as a cofactor.

The protein resides in the cytoplasm. It catalyses the reaction N-acetyl-alpha-neuraminate = aceneuramate. The catalysed reaction is N-acetyl-beta-neuraminate = aceneuramate. Its activity is regulated as follows. Inhibited by 1,10-phenanthroline. Its function is as follows. Opens both the alpha- and beta-forms of N-acetylneuraminate (sialic acid; Neu5Ac) to provide aceneuramate, the preferred substrate for NanA. Has preferential activity on the beta-anomer rather than the alpha-anomer. Accelerates a reaction that is spontaneous at slightly alkaline pH, facilitates the reaction at acidic pH. The polypeptide is N-acetylneuraminate anomerase NanQ (Escherichia coli (strain K12)).